The primary structure comprises 422 residues: Proline--tRNA ligase (422 aa).

This sequence belongs to the class-II aminoacyl-tRNA synthetase family. ProS type 2 subfamily. As to quaternary structure, homodimer.

It is found in the cytoplasm. It carries out the reaction tRNA(Pro) + L-proline + ATP = L-prolyl-tRNA(Pro) + AMP + diphosphate. In terms of biological role, catalyzes the attachment of proline to tRNA(Pro) in a two-step reaction: proline is first activated by ATP to form Pro-AMP and then transferred to the acceptor end of tRNA(Pro). The polypeptide is Proline--tRNA ligase (Wolbachia sp. subsp. Drosophila simulans (strain wRi)).